The primary structure comprises 541 residues: Chaperonin GroEL (541 aa).

Residues 29 to 32, 86 to 90, Gly413, and Asp495 contribute to the ATP site; these read TLGP and DGTTT.

This sequence belongs to the chaperonin (HSP60) family. Forms a cylinder of 14 subunits composed of two heptameric rings stacked back-to-back. Interacts with the co-chaperonin GroES.

Its subcellular location is the cytoplasm. The enzyme catalyses ATP + H2O + a folded polypeptide = ADP + phosphate + an unfolded polypeptide.. In terms of biological role, together with its co-chaperonin GroES, plays an essential role in assisting protein folding. The GroEL-GroES system forms a nano-cage that allows encapsulation of the non-native substrate proteins and provides a physical environment optimized to promote and accelerate protein folding. The chain is Chaperonin GroEL from Thermoanaerobacter pseudethanolicus (strain ATCC 33223 / 39E) (Clostridium thermohydrosulfuricum).